The following is a 511-amino-acid chain: Alpha-amylase 2B (511 aa).

The first 15 residues, Met-1–Ala-15, serve as a signal peptide directing secretion. Pyrrolidone carboxylic acid is present on Gln-16. Disulfide bonds link Cys-43–Cys-101, Cys-85–Cys-130, and Cys-156–Cys-175. 3 residues coordinate Ca(2+): Asn-115, Arg-173, and Asp-182. Arg-210 serves as a coordination point for chloride. Catalysis depends on Asp-212, which acts as the Nucleophile. His-216 is a Ca(2+) binding site. The Proton donor role is filled by Glu-248. Positions 313 and 352 each coordinate chloride. Disulfide bonds link Cys-393–Cys-399 and Cys-465–Cys-477.

Belongs to the glycosyl hydrolase 13 family. As to quaternary structure, monomer. The cofactor is Ca(2+). Chloride is required as a cofactor.

The protein localises to the secreted. It carries out the reaction Endohydrolysis of (1-&gt;4)-alpha-D-glucosidic linkages in polysaccharides containing three or more (1-&gt;4)-alpha-linked D-glucose units.. The protein is Alpha-amylase 2B (AMY2B) of Homo sapiens (Human).